Consider the following 307-residue polypeptide: Transcription factor bHLH127 (307 aa).

Disordered regions lie at residues 41-68 (SDPL…LPHQ) and 101-155 (PHPQ…AEMH). Over residues 110–119 (APPPPKPPSS) the composition is skewed to pro residues. A bHLH domain is found at 150–199 (RAAEMHNLAERRRREKINERMKTLQQLIPRCNKSTKVSMLEDVIEYVKSL).

This sequence belongs to the bHLH protein family. In terms of assembly, homodimer.

It is found in the nucleus. The polypeptide is Transcription factor bHLH127 (BHLH127) (Arabidopsis thaliana (Mouse-ear cress)).